A 1259-amino-acid polypeptide reads, in one-letter code: Lysine-specific demethylase 2B (1259 aa).

One can recognise a JmjC domain in the interval 147 to 315; it reads FSHTKLERVV…MQLRVFEIED (169 aa). A substrate-binding site is contributed by threonine 208. Fe cation contacts are provided by histidine 211 and aspartate 213. Lysine 228 contributes to the substrate binding site. Histidine 283 provides a ligand contact to Fe cation. The span at 388–402 shows a compositional bias: basic and acidic residues; that stretch reads EEKGNLVEKPSKQSG. Disordered stretches follow at residues 388-463 and 536-562; these read EEKG…ATDM and KPSK…SANR. Residues 403–413 are compositionally biased toward polar residues; sequence DESSTTNSTHS. Residues 414–423 are compositionally biased toward basic and acidic residues; that stretch reads NGKDAAEKKQ. Polar residues predominate over residues 426 to 437; sequence TLMQQLKRTLSN. Residues 536-548 show a composition bias toward basic residues; sequence KPSKNRAVGRPKG. The CXXC-type zinc finger occupies 567–613; it reads ARRRRTRCRKCEACLRTECGECHFCKDMKKFGGPGRMKQSCIMRQCI. Zn(2+) contacts are provided by cysteine 574, cysteine 577, cysteine 580, cysteine 585, cysteine 588, cysteine 591, cysteine 607, cysteine 612, cysteine 623, cysteine 626, cysteine 649, cysteine 652, histidine 657, cysteine 660, cysteine 680, and cysteine 683. Residues 620 to 686 form a PHD-type zinc finger; the sequence is TAVCLVCGEA…CWECPKCNHA (67 aa). Composition is skewed to basic and acidic residues over residues 729–763 and 771–790; these read KKKV…EDGH and EKPP…EEKL. The interval 729-958 is disordered; that stretch reads KKKVEREETP…PPPSLSPPKC (230 aa). The span at 835-848 shows a compositional bias: polar residues; sequence SRSSSPTAGPSTEG. The span at 854-863 shows a compositional bias: basic residues; sequence KKKIRRKRRV. Residues 864 to 877 are compositionally biased toward basic and acidic residues; the sequence is SNKELSKELSKELN. Residues 864–891 adopt a coiled-coil conformation; sequence SNKELSKELSKELNQEIQKTESSLASEN. The segment covering 878–889 has biased composition (polar residues); it reads QEIQKTESSLAS. The span at 890–908 shows a compositional bias: basic and acidic residues; that stretch reads ENHHPIKSEPESDNEESKK. Positions 985-1030 constitute an F-box domain; the sequence is AHVMQREVWMAIFSYLSHRDLCICMRICRTWNRWCCDKRLWTQIDL. LRR repeat units lie at residues 1056-1081, 1082-1105, 1145-1170, 1171-1200, and 1201-1225; these read WTNI…NLSG, CSWI…NVQW, GLDI…DLSY, CNHV…NLSD, and CNNV…DLRF.

The protein belongs to the JHDM1 histone demethylase family. Fe(2+) is required as a cofactor.

Its subcellular location is the nucleus. The protein resides in the nucleolus. The protein localises to the chromosome. It carries out the reaction N(6),N(6)-dimethyl-L-lysyl(36)-[histone H3] + 2 2-oxoglutarate + 2 O2 = L-lysyl(36)-[histone H3] + 2 formaldehyde + 2 succinate + 2 CO2. With respect to regulation, histone demethylase activity is inhibited by fumarate. Its function is as follows. Histone demethylase that demethylates 'Lys-4' and 'Lys-36' of histone H3, thereby playing a central role in histone code. Preferentially demethylates trimethylated H3 'Lys-4' and dimethylated H3 'Lys-36' residue while it has weak or no activity for mono- and tri-methylated H3 'Lys-36'. Preferentially binds the transcribed region of ribosomal RNA and represses the transcription of ribosomal RNA genes which inhibits cell growth and proliferation. This chain is Lysine-specific demethylase 2B (kdm2b), found in Xenopus laevis (African clawed frog).